A 263-amino-acid polypeptide reads, in one-letter code: Zinc finger protein STAMENLESS 1 (263 aa).

Positions 1–51 (MNSSRRQEGSPLDLNNLPDEFGKQTVESSTTTAASSAEASRVTKKKSNGGK) are disordered. Low complexity predominate over residues 25-40 (TVESSTTTAASSAEAS). The segment at 58–80 (YECRFCSLKFCKSQALGGHMNRH) adopts a C2H2-type zinc-finger fold.

In terms of tissue distribution, expressed in leaf primordia, inflorescence meristem, rachis branch meristems, floral meristem and floral organ primordia.

It localises to the nucleus. Its function is as follows. Regulates floral organ identity and cell proliferation in the inner floral whorls. Probably specifies the identities of lodicule and stamen through positive regulation of MADS16 expression. May contribute to morphogenesis by suppressing OSH1 expression in the lateral organs. The polypeptide is Zinc finger protein STAMENLESS 1 (SL1) (Oryza sativa subsp. japonica (Rice)).